A 549-amino-acid polypeptide reads, in one-letter code: Glucose-6-phosphate isomerase (549 aa).

Catalysis depends on glutamate 355, which acts as the Proton donor. Active-site residues include histidine 387 and lysine 515.

It belongs to the GPI family.

It is found in the cytoplasm. The enzyme catalyses alpha-D-glucose 6-phosphate = beta-D-fructose 6-phosphate. It functions in the pathway carbohydrate biosynthesis; gluconeogenesis. Its pathway is carbohydrate degradation; glycolysis; D-glyceraldehyde 3-phosphate and glycerone phosphate from D-glucose: step 2/4. Functionally, catalyzes the reversible isomerization of glucose-6-phosphate to fructose-6-phosphate. The sequence is that of Glucose-6-phosphate isomerase from Mannheimia succiniciproducens (strain KCTC 0769BP / MBEL55E).